We begin with the raw amino-acid sequence, 157 residues long: Small ribosomal subunit protein uS7 (157 aa).

Belongs to the universal ribosomal protein uS7 family. As to quaternary structure, part of the 30S ribosomal subunit. Contacts proteins S9 and S11.

Functionally, one of the primary rRNA binding proteins, it binds directly to 16S rRNA where it nucleates assembly of the head domain of the 30S subunit. Is located at the subunit interface close to the decoding center, probably blocks exit of the E-site tRNA. The protein is Small ribosomal subunit protein uS7 of Borrelia turicatae (strain 91E135).